The sequence spans 123 residues: MPTINQLIRKPRKAVVKRNKVPAMQACPQKRGVCTRVYTTTPKKPNSALRKVARVRLTNGFEVTSYIPGEGHNLQEHSVVMIRGGRVKDLPGVRYHIIRGVLDTQGVKDRRQRRSKYGAKRPK.

The residue at position 89 (aspartate 89) is a 3-methylthioaspartic acid. The interval 104–123 (TQGVKDRRQRRSKYGAKRPK) is disordered. The segment covering 110–123 (RRQRRSKYGAKRPK) has biased composition (basic residues).

It belongs to the universal ribosomal protein uS12 family. In terms of assembly, part of the 30S ribosomal subunit. Contacts proteins S8 and S17. May interact with IF1 in the 30S initiation complex.

Its function is as follows. With S4 and S5 plays an important role in translational accuracy. Interacts with and stabilizes bases of the 16S rRNA that are involved in tRNA selection in the A site and with the mRNA backbone. Located at the interface of the 30S and 50S subunits, it traverses the body of the 30S subunit contacting proteins on the other side and probably holding the rRNA structure together. The combined cluster of proteins S8, S12 and S17 appears to hold together the shoulder and platform of the 30S subunit. The sequence is that of Small ribosomal subunit protein uS12 from Rhodospirillum rubrum (strain ATCC 11170 / ATH 1.1.1 / DSM 467 / LMG 4362 / NCIMB 8255 / S1).